The following is a 297-amino-acid chain: HTH-type transcriptional regulator PerR (297 aa).

In terms of domain architecture, HTH lysR-type spans 7–64; that stretch reads APLNLLRAFEAAGRTGAFALAASELELSPSAISHAIRKLENLLDVRLFQRSTREITLT. The H-T-H motif DNA-binding region spans 24-44; the sequence is FALAASELELSPSAISHAIRK.

The protein belongs to the LysR transcriptional regulatory family.

Functionally, apparent regulatory gene involved in peroxide resistance in stationary phase. This Escherichia coli (strain K12) protein is HTH-type transcriptional regulator PerR (perR).